A 200-amino-acid chain; its full sequence is 3-isopropylmalate dehydratase small subunit (200 aa).

This sequence belongs to the LeuD family. LeuD type 1 subfamily. Heterodimer of LeuC and LeuD.

It carries out the reaction (2R,3S)-3-isopropylmalate = (2S)-2-isopropylmalate. Its pathway is amino-acid biosynthesis; L-leucine biosynthesis; L-leucine from 3-methyl-2-oxobutanoate: step 2/4. Catalyzes the isomerization between 2-isopropylmalate and 3-isopropylmalate, via the formation of 2-isopropylmaleate. This Vibrio parahaemolyticus serotype O3:K6 (strain RIMD 2210633) protein is 3-isopropylmalate dehydratase small subunit.